The chain runs to 674 residues: U-box domain-containing protein 16 (674 aa).

The U-box domain maps to 273-347 (NIPADFRCPI…VLWCRDQKIP (75 aa)). ARM repeat units lie at residues 399–438 (TVAR…NLSI), 441–481 (QNKT…SLAG), and 484–523 (AYRR…NLVA).

It catalyses the reaction S-ubiquitinyl-[E2 ubiquitin-conjugating enzyme]-L-cysteine + [acceptor protein]-L-lysine = [E2 ubiquitin-conjugating enzyme]-L-cysteine + N(6)-ubiquitinyl-[acceptor protein]-L-lysine.. Its pathway is protein modification; protein ubiquitination. In terms of biological role, functions as an E3 ubiquitin ligase. This chain is U-box domain-containing protein 16 (PUB16), found in Arabidopsis thaliana (Mouse-ear cress).